Here is a 626-residue protein sequence, read N- to C-terminus: Chaperone protein HtpG (626 aa).

The interval 1–332 (MTNNDTPGMR…TEDLPLNVSR (332 aa)) is a; substrate-binding. Residues 333–546 (EVVQSSKVMA…KDSLDSSMEK (214 aa)) are b. The tract at residues 547–626 (MMKMMHAEMP…ELIEAATMSR (80 aa)) is c.

The protein belongs to the heat shock protein 90 family. In terms of assembly, homodimer.

The protein resides in the cytoplasm. In terms of biological role, molecular chaperone. Has ATPase activity. This chain is Chaperone protein HtpG, found in Chlorobium phaeobacteroides (strain DSM 266 / SMG 266 / 2430).